A 275-amino-acid chain; its full sequence is Uroporphyrinogen-III synthase (275 aa).

The protein belongs to the uroporphyrinogen-III synthase family.

The catalysed reaction is hydroxymethylbilane = uroporphyrinogen III + H2O. The protein operates within porphyrin-containing compound metabolism; protoporphyrin-IX biosynthesis; coproporphyrinogen-III from 5-aminolevulinate: step 3/4. Functionally, catalyzes cyclization of the linear tetrapyrrole, hydroxymethylbilane, to the macrocyclic uroporphyrinogen III, the fourth step in the heme biosynthetic pathway. The polypeptide is Uroporphyrinogen-III synthase (Saccharomyces cerevisiae (strain ATCC 204508 / S288c) (Baker's yeast)).